The chain runs to 516 residues: 2-isopropylmalate synthase (516 aa).

Positions 5-267 (VIIFDTTLRD…STNIVHKEIY (263 aa)) constitute a Pyruvate carboxyltransferase domain. Mn(2+) contacts are provided by aspartate 14, histidine 202, histidine 204, and asparagine 238. The tract at residues 392-516 (YLKFFSVQSI…NKKLKNLKKY (125 aa)) is regulatory domain.

Belongs to the alpha-IPM synthase/homocitrate synthase family. LeuA type 1 subfamily. As to quaternary structure, homodimer. The cofactor is Mn(2+).

The protein resides in the cytoplasm. The catalysed reaction is 3-methyl-2-oxobutanoate + acetyl-CoA + H2O = (2S)-2-isopropylmalate + CoA + H(+). It functions in the pathway amino-acid biosynthesis; L-leucine biosynthesis; L-leucine from 3-methyl-2-oxobutanoate: step 1/4. Catalyzes the condensation of the acetyl group of acetyl-CoA with 3-methyl-2-oxobutanoate (2-ketoisovalerate) to form 3-carboxy-3-hydroxy-4-methylpentanoate (2-isopropylmalate). This is 2-isopropylmalate synthase from Buchnera aphidicola subsp. Diuraphis noxia.